We begin with the raw amino-acid sequence, 395 residues long: Tryptophan--tRNA ligase, cytoplasmic (395 aa).

Residues 91–100 carry the 'HIGH' region motif; sequence PSSDSMHLGH. The 'KMSKS' region signature appears at 275-279; sequence KMSAS. 2 positions are modified to phosphothreonine: Thr-288 and Thr-290.

This sequence belongs to the class-I aminoacyl-tRNA synthetase family.

The protein localises to the cytoplasm. It carries out the reaction tRNA(Trp) + L-tryptophan + ATP = L-tryptophyl-tRNA(Trp) + AMP + diphosphate + H(+). This is Tryptophan--tRNA ligase, cytoplasmic (wrs1) from Schizosaccharomyces pombe (strain 972 / ATCC 24843) (Fission yeast).